Reading from the N-terminus, the 690-residue chain is Methionine--tRNA ligase (690 aa).

Residues 20-30 carry the 'HIGH' region motif; sequence PYANGSIHLGH. Cysteine 151, cysteine 154, cysteine 164, and cysteine 167 together coordinate Zn(2+). The 'KMSKS' region signature appears at 337–341; that stretch reads KMSKS. An ATP-binding site is contributed by lysine 340. Residues 589–690 enclose the tRNA-binding domain; that stretch reads DFAKVDLRIA…EGAQPGMRVM (102 aa).

This sequence belongs to the class-I aminoacyl-tRNA synthetase family. MetG type 1 subfamily. As to quaternary structure, homodimer. Zn(2+) serves as cofactor.

The protein resides in the cytoplasm. The enzyme catalyses tRNA(Met) + L-methionine + ATP = L-methionyl-tRNA(Met) + AMP + diphosphate. Is required not only for elongation of protein synthesis but also for the initiation of all mRNA translation through initiator tRNA(fMet) aminoacylation. The protein is Methionine--tRNA ligase of Vibrio vulnificus (strain YJ016).